The chain runs to 416 residues: MPGKSTRPLPAPRPCCAPCPFWSPRLAGMQGTGSTRSTGSESWRSWAWTSRPSLLVTGRLHFPQLALRRRLGQLSCMSKPALKLRSWPLTVLYYLLPLGALRPLSRVGWRPVSRVALYKSVPTRLLSRAWGRLNQVELPHWLRRPVYSLYIWTFGVNMKEAAVEDLHHYRNLSEFFRRKLKPQARPVCGLHSVISPSDGKILNFGQVKNCEVEQVKGVTYSLESFLGPRTPSEDLPFPPATPHSSFRSQLVTREGNELYHCVIYLAPGDYHCFHSPTDWTVSHRRHFPGSLMSVNPGMARWIKELFCHNERVVLTGDWKHGFFSLTAVGATNVGSIRIYFDRDLHTNSPRYSKGSYNDFSFVTHANKEGIPMRKGEHLGEFNLGSTIVLIFEAPKDFNFRLQAGQKIRFGEALGSL.

The Mitochondrial matrix segment spans residues 1 to 67 (MPGKSTRPLP…GRLHFPQLAL (67 aa)). The chain crosses the membrane as a helical span at residues 68–86 (RRRLGQLSCMSKPALKLRS). Over 87–416 (WPLTVLYYLL…IRFGEALGSL (330 aa)) the chain is Mitochondrial intermembrane. Catalysis depends on charge relay system; for autoendoproteolytic cleavage activity residues D198, H274, and S385. The active-site Schiff-base intermediate with substrate; via pyruvic acid; for decarboxylase activity is S385. S385 is subject to Pyruvic acid (Ser); by autocatalysis.

This sequence belongs to the phosphatidylserine decarboxylase family. PSD-B subfamily. Eukaryotic type I sub-subfamily. Heterodimer of a large membrane-associated beta subunit and a small pyruvoyl-containing alpha subunit. Pyruvate is required as a cofactor. Is synthesized initially as an inactive proenzyme. Formation of the active enzyme involves a self-maturation process in which the active site pyruvoyl group is generated from an internal serine residue via an autocatalytic post-translational modification. Two non-identical subunits are generated from the proenzyme in this reaction, and the pyruvate is formed at the N-terminus of the alpha chain, which is derived from the carboxyl end of the proenzyme. The autoendoproteolytic cleavage occurs by a canonical serine protease mechanism, in which the side chain hydroxyl group of the serine supplies its oxygen atom to form the C-terminus of the beta chain, while the remainder of the serine residue undergoes an oxidative deamination to produce ammonia and the pyruvoyl prosthetic group on the alpha chain. During this reaction, the Ser that is part of the protease active site of the proenzyme becomes the pyruvoyl prosthetic group, which constitutes an essential element of the active site of the mature decarboxylase.

Its subcellular location is the mitochondrion inner membrane. It localises to the cytoplasm. The protein localises to the lipid droplet. The catalysed reaction is a 1,2-diacyl-sn-glycero-3-phospho-L-serine + H(+) = a 1,2-diacyl-sn-glycero-3-phosphoethanolamine + CO2. The protein operates within phospholipid metabolism; phosphatidylethanolamine biosynthesis. Functionally, catalyzes the formation of phosphatidylethanolamine (PtdEtn) from phosphatidylserine (PtdSer). Plays a central role in phospholipid metabolism and in the interorganelle trafficking of phosphatidylserine. May be involved in lipid droplet biogenesis at the endoplasmic reticulum membrane. This is Phosphatidylserine decarboxylase proenzyme, mitochondrial from Bos taurus (Bovine).